The chain runs to 153 residues: UPF0179 protein AF_2154 (153 aa).

This sequence belongs to the UPF0179 family.

This is UPF0179 protein AF_2154 from Archaeoglobus fulgidus (strain ATCC 49558 / DSM 4304 / JCM 9628 / NBRC 100126 / VC-16).